We begin with the raw amino-acid sequence, 156 residues long: MPRRREVEKRKILPDPKFQDRIVAKFVNNLMREGKKSTGERIIYGAFDQVEQKLKDDPLKIFKKALDNVKPVVEVKSRRVGGATYQVPVEVRQDRRTALAMRWLIDYSKARGEKTMQEKLAGEIIDAANNRGNAVKKREDTHKMAEANKAFAHYRW.

The protein belongs to the universal ribosomal protein uS7 family. In terms of assembly, part of the 30S ribosomal subunit. Contacts proteins S9 and S11.

One of the primary rRNA binding proteins, it binds directly to 16S rRNA where it nucleates assembly of the head domain of the 30S subunit. Is located at the subunit interface close to the decoding center, probably blocks exit of the E-site tRNA. The chain is Small ribosomal subunit protein uS7 from Anaeromyxobacter sp. (strain Fw109-5).